We begin with the raw amino-acid sequence, 232 residues long: Oxidoreductase 1 (232 aa).

It belongs to the MQO family. Requires FAD as cofactor.

Its function is as follows. Oxidoreductase; part of the gene cluster that mediates the biosynthesis of elsinochromes, pigments consisting of at least four interconvertible tautomers (A, B, C and D) that have a core phenolic quinone to which various side chains are attached and which play an important role in fungal pathogenesis. The non-reducing polyketide synthase PKS1 was proposed to iteratively catalyze decarboxylation between acetyl-CoA and malonyl-CoA subunits for polyketide chain elongation. The released polyketide undergoes cyclization to form an aromatic ring, and proceeds via serial modification steps to produce the heptaketide back- bone of elsinochrome. As elsinochrome has a symmetrical structure, two identical heptaketides are fused to form a core 1,2-dihydrobenzo-perylene ring structure, which can then be successively modified to produce the various derivatives of elsinochrome. Some of these reactions may be cooperatively carried out, at least in part, by the products of RDT1, OXR1 and PKS1. PRF1, embedded within the elsinochrome cluster possibly functions to stabilize some of the biosynthetic enzymes required for elsinochrome production. As prefoldin is a hexamer containing 2 a and 4 b subunits, additional prefoldin subunits, whose coding genes may not immediately link to the elsinochrome biosynthetic gene cluster, are required to fulfill the chaperone function. In addition, no methyltransferase-coding gene exists within the biosynthetic gene cluster, even though elsinochrome has four methyl groups at positions C3, C7, C8 and C12. Apparently, the identified gene cluster does not contain the entire entourage of genes responsible for elsinochrome biosynthesis. Once elsinochrome is synthesized, it must be exported outside the fungal cells, which is probably accomplished by the ECT1 transporter, to avoid toxicity. This is Oxidoreductase 1 from Elsinoe fawcettii (Citrus scab fungus).